The chain runs to 253 residues: MSLALEQANPIQENFLREPPLPKHIAIIMDGNRRWQKKHEQFCKSNAISGHRRGADSIPQIVDTAALLGVEALTLFAFSTENFSRSKTEVAELFSLFNSQLHSKLSFLHDREIRLRCIGDLSKLPQELQNNIAKAVSATTHYSHMELIFAINYGSKNELVRAFKELHQDLTNKKISINEISEELISSYLDTSGLPDPDLLIRTGGEMRVSNFLLWQIAYTELYVTDVLWPDFTAHDLLEAIKTYQQRSRRGGK.

Asp-30 is a catalytic residue. Residue Asp-30 participates in Mg(2+) binding. Substrate is bound by residues 31–34, Trp-35, His-51, and 79–81; these read GNRR and STE. Catalysis depends on Asn-82, which acts as the Proton acceptor. Residues Phe-83, Arg-85, Arg-202, and 208 to 210 contribute to the substrate site; that span reads RVS. Glu-221 contributes to the Mg(2+) binding site.

This sequence belongs to the UPP synthase family. In terms of assembly, homodimer. It depends on Mg(2+) as a cofactor.

In terms of biological role, catalyzes the condensation of isopentenyl diphosphate (IPP) with allylic pyrophosphates generating different type of terpenoids. This chain is Isoprenyl transferase, found in Chlamydia muridarum (strain MoPn / Nigg).